Here is a 252-residue protein sequence, read N- to C-terminus: Type III pantothenate kinase (252 aa).

6–13 (DVGNTHTT) provides a ligand contact to ATP. Residue 104–107 (GADR) coordinates substrate. The active-site Proton acceptor is the Asp106. Asp126 serves as a coordination point for K(+). Thr129 contributes to the ATP binding site. Substrate is bound at residue Thr180.

This sequence belongs to the type III pantothenate kinase family. In terms of assembly, homodimer. It depends on NH4(+) as a cofactor. K(+) is required as a cofactor.

It is found in the cytoplasm. It catalyses the reaction (R)-pantothenate + ATP = (R)-4'-phosphopantothenate + ADP + H(+). Its pathway is cofactor biosynthesis; coenzyme A biosynthesis; CoA from (R)-pantothenate: step 1/5. Catalyzes the phosphorylation of pantothenate (Pan), the first step in CoA biosynthesis. This chain is Type III pantothenate kinase, found in Fervidobacterium nodosum (strain ATCC 35602 / DSM 5306 / Rt17-B1).